The chain runs to 466 residues: Triplex capsid protein 1 (466 aa).

Residues Met-1–Gly-29 are disordered.

The protein belongs to the herpesviridae TRX1 protein family. Interacts with TRX2, MCP and capsid vertex component 2/CVC2.

It is found in the virion. The protein localises to the host nucleus. Its function is as follows. Structural component of the T=16 icosahedral capsid. The capsid is composed of pentamers and hexamers of major capsid protein/MCP, which are linked together by heterotrimers called triplexes. These triplexes are formed by a single molecule of triplex protein 1/TRX1 and two copies of triplex protein 2/TRX2. Additionally, TRX1 is required for efficient transport of TRX2 to the nucleus, which is the site of capsid assembly. The sequence is that of Triplex capsid protein 1 from Homo sapiens (Human).